The primary structure comprises 430 residues: Gamma-glutamyl phosphate reductase (430 aa).

The protein belongs to the gamma-glutamyl phosphate reductase family.

The protein resides in the cytoplasm. It carries out the reaction L-glutamate 5-semialdehyde + phosphate + NADP(+) = L-glutamyl 5-phosphate + NADPH + H(+). Its pathway is amino-acid biosynthesis; L-proline biosynthesis; L-glutamate 5-semialdehyde from L-glutamate: step 2/2. Catalyzes the NADPH-dependent reduction of L-glutamate 5-phosphate into L-glutamate 5-semialdehyde and phosphate. The product spontaneously undergoes cyclization to form 1-pyrroline-5-carboxylate. The chain is Gamma-glutamyl phosphate reductase from Rhodopseudomonas palustris (strain TIE-1).